A 180-amino-acid chain; its full sequence is MGLTISSLLTRLFGKKQMRILMVGLDAAGKTTILYKLKLGEIVTTIPTIGFNVETVEYKNICFTVWDVGGQDKIRPLWRHYFQNTQGLIFVVDSNDRDRITEAERELQNMLQEDELRDAVLLVFANKQDLPNAMTAAELTDKLRLNQLRNRHWFIQSTCATQGHGLYEGLDWLSAELAKK.

Gly2 carries the N-myristoyl glycine lipid modification. GTP-binding positions include Gly24 to Thr31, Asp67 to Gln71, and Asn126 to Asp129.

This sequence belongs to the small GTPase superfamily. Arf family. Uniformly distributed throughout adults.

It localises to the golgi apparatus. Functionally, GTP-binding protein involved in protein trafficking; may modulate vesicle budding and uncoating within the Golgi apparatus. This chain is ADP ribosylation factor 4, found in Drosophila melanogaster (Fruit fly).